Reading from the N-terminus, the 131-residue chain is Small ribosomal subunit protein uS10m (131 aa).

This sequence belongs to the universal ribosomal protein uS10 family.

It localises to the mitochondrion. This chain is Small ribosomal subunit protein uS10m (mrps10), found in Dictyostelium discoideum (Social amoeba).